We begin with the raw amino-acid sequence, 493 residues long: Probable malate:quinone oxidoreductase (493 aa).

It belongs to the MQO family. Requires FAD as cofactor.

The enzyme catalyses (S)-malate + a quinone = a quinol + oxaloacetate. The protein operates within carbohydrate metabolism; tricarboxylic acid cycle; oxaloacetate from (S)-malate (quinone route): step 1/1. The protein is Probable malate:quinone oxidoreductase of Lysinibacillus sphaericus (strain C3-41).